Consider the following 530-residue polypeptide: Phosphoenolpyruvate carboxykinase (ATP) (530 aa).

Substrate is bound by residues R58, Y195, and K201. Residues K201, H220, and 236-244 (GLSGTGKTT) each bind ATP. K201 and H220 together coordinate Mn(2+). D257 lines the Mn(2+) pocket. Residues E285, R321, 440–441 (RI), and T446 contribute to the ATP site. Residue R321 participates in substrate binding.

Belongs to the phosphoenolpyruvate carboxykinase (ATP) family. It depends on Mn(2+) as a cofactor.

The protein resides in the cytoplasm. It catalyses the reaction oxaloacetate + ATP = phosphoenolpyruvate + ADP + CO2. The protein operates within carbohydrate biosynthesis; gluconeogenesis. In terms of biological role, involved in the gluconeogenesis. Catalyzes the conversion of oxaloacetate (OAA) to phosphoenolpyruvate (PEP) through direct phosphoryl transfer between the nucleoside triphosphate and OAA. The polypeptide is Phosphoenolpyruvate carboxykinase (ATP) (Staphylococcus aureus (strain MSSA476)).